A 509-amino-acid chain; its full sequence is Maturase K (509 aa).

It belongs to the intron maturase 2 family. MatK subfamily.

The protein resides in the plastid. Its subcellular location is the chloroplast. Usually encoded in the trnK tRNA gene intron. Probably assists in splicing its own and other chloroplast group II introns. The polypeptide is Maturase K (Sequoia sempervirens (California redwood)).